The primary structure comprises 554 residues: Putative acyl-coenzyme A synthetase (554 aa).

Residue 195 to 206 participates in AMP binding; the sequence is LLYSSGTTGPPK.

Belongs to the ATP-dependent AMP-binding enzyme family.

This chain is Putative acyl-coenzyme A synthetase, found in Emericella nidulans (strain FGSC A4 / ATCC 38163 / CBS 112.46 / NRRL 194 / M139) (Aspergillus nidulans).